The following is a 332-amino-acid chain: 2,3-diketo-L-gulonate reductase (332 aa).

Histidine 44 functions as the Proton donor in the catalytic mechanism. Residues 168-174, 224-225, and 304-306 contribute to the NAD(+) site; these read ITMVDMS, WK, and GHE.

This sequence belongs to the LDH2/MDH2 oxidoreductase family. DlgD subfamily. As to quaternary structure, homodimer.

The protein resides in the cytoplasm. It catalyses the reaction 3-dehydro-L-gulonate + NAD(+) = 2,3-dioxo-L-gulonate + NADH + H(+). The catalysed reaction is 3-dehydro-L-gulonate + NADP(+) = 2,3-dioxo-L-gulonate + NADPH + H(+). In terms of biological role, catalyzes the reduction of 2,3-diketo-L-gulonate in the presence of NADH, to form 3-keto-L-gulonate. The sequence is that of 2,3-diketo-L-gulonate reductase from Escherichia coli O139:H28 (strain E24377A / ETEC).